A 196-amino-acid polypeptide reads, in one-letter code: Imidazole glycerol phosphate synthase subunit HisH (196 aa).

The region spanning 2–196 (KATLINYGVG…LRNFYSWVKR (195 aa)) is the Glutamine amidotransferase type-1 domain. Catalysis depends on Cys-76, which acts as the Nucleophile. Catalysis depends on residues His-175 and Glu-177.

In terms of assembly, heterodimer of HisH and HisF.

The protein resides in the cytoplasm. The enzyme catalyses 5-[(5-phospho-1-deoxy-D-ribulos-1-ylimino)methylamino]-1-(5-phospho-beta-D-ribosyl)imidazole-4-carboxamide + L-glutamine = D-erythro-1-(imidazol-4-yl)glycerol 3-phosphate + 5-amino-1-(5-phospho-beta-D-ribosyl)imidazole-4-carboxamide + L-glutamate + H(+). It carries out the reaction L-glutamine + H2O = L-glutamate + NH4(+). It participates in amino-acid biosynthesis; L-histidine biosynthesis; L-histidine from 5-phospho-alpha-D-ribose 1-diphosphate: step 5/9. Functionally, IGPS catalyzes the conversion of PRFAR and glutamine to IGP, AICAR and glutamate. The HisH subunit catalyzes the hydrolysis of glutamine to glutamate and ammonia as part of the synthesis of IGP and AICAR. The resulting ammonia molecule is channeled to the active site of HisF. The chain is Imidazole glycerol phosphate synthase subunit HisH from Sulfurisphaera tokodaii (strain DSM 16993 / JCM 10545 / NBRC 100140 / 7) (Sulfolobus tokodaii).